A 486-amino-acid polypeptide reads, in one-letter code: N-succinylglutamate 5-semialdehyde dehydrogenase (486 aa).

220 to 225 lines the NAD(+) pocket; the sequence is GSSRTG. Catalysis depends on residues E243 and C277.

This sequence belongs to the aldehyde dehydrogenase family. AstD subfamily.

The enzyme catalyses N-succinyl-L-glutamate 5-semialdehyde + NAD(+) + H2O = N-succinyl-L-glutamate + NADH + 2 H(+). Its pathway is amino-acid degradation; L-arginine degradation via AST pathway; L-glutamate and succinate from L-arginine: step 4/5. In terms of biological role, catalyzes the NAD-dependent reduction of succinylglutamate semialdehyde into succinylglutamate. This is N-succinylglutamate 5-semialdehyde dehydrogenase from Shewanella halifaxensis (strain HAW-EB4).